A 455-amino-acid chain; its full sequence is tRNA modification GTPase MnmE (455 aa).

Residues Arg-24, Glu-81, and Lys-120 each coordinate (6S)-5-formyl-5,6,7,8-tetrahydrofolate. Positions 216 to 378 (GMTVVIAGRP…LREHLKACMG (163 aa)) constitute a TrmE-type G domain. Asn-226 is a binding site for K(+). GTP contacts are provided by residues 226–231 (NAGKSS), 245–251 (TDIAGTT), 270–273 (DTAG), and 335–338 (NKAD). Ser-230 provides a ligand contact to Mg(2+). The K(+) site is built by Thr-245, Ile-247, and Thr-250. Thr-251 is a Mg(2+) binding site. Lys-455 is a (6S)-5-formyl-5,6,7,8-tetrahydrofolate binding site.

Belongs to the TRAFAC class TrmE-Era-EngA-EngB-Septin-like GTPase superfamily. TrmE GTPase family. In terms of assembly, homodimer. Heterotetramer of two MnmE and two MnmG subunits. Requires K(+) as cofactor.

The protein localises to the cytoplasm. Functionally, exhibits a very high intrinsic GTPase hydrolysis rate. Involved in the addition of a carboxymethylaminomethyl (cmnm) group at the wobble position (U34) of certain tRNAs, forming tRNA-cmnm(5)s(2)U34. The polypeptide is tRNA modification GTPase MnmE (Ectopseudomonas mendocina (strain ymp) (Pseudomonas mendocina)).